The following is a 134-amino-acid chain: Iron-sulfur cluster insertion protein ErpA (134 aa).

Residues Cys47, Cys126, and Cys128 each contribute to the iron-sulfur cluster site.

The protein belongs to the HesB/IscA family. Homodimer. It depends on iron-sulfur cluster as a cofactor.

Functionally, required for insertion of 4Fe-4S clusters for at least IspG. The protein is Iron-sulfur cluster insertion protein ErpA of Coxiella burnetii (strain RSA 331 / Henzerling II).